The primary structure comprises 362 residues: 3-isopropylmalate dehydrogenase (362 aa).

77–88 (GPKWGTGAVRPE) is a binding site for NAD(+). Residues arginine 95, arginine 105, arginine 134, and aspartate 223 each contribute to the substrate site. Positions 223, 248, and 252 each coordinate Mg(2+). 287 to 298 (GSAPDLPANKVN) contributes to the NAD(+) binding site.

It belongs to the isocitrate and isopropylmalate dehydrogenases family. Homodimer. Mg(2+) is required as a cofactor. Mn(2+) serves as cofactor.

It localises to the cytoplasm. The catalysed reaction is (2R,3S)-3-isopropylmalate + NAD(+) = 4-methyl-2-oxopentanoate + CO2 + NADH. Its pathway is amino-acid biosynthesis; L-leucine biosynthesis; L-leucine from 3-methyl-2-oxobutanoate: step 3/4. Catalyzes the oxidation of 3-carboxy-2-hydroxy-4-methylpentanoate (3-isopropylmalate) to 3-carboxy-4-methyl-2-oxopentanoate. The product decarboxylates to 4-methyl-2 oxopentanoate. The chain is 3-isopropylmalate dehydrogenase (LEU2) from Kluyveromyces lactis (strain ATCC 8585 / CBS 2359 / DSM 70799 / NBRC 1267 / NRRL Y-1140 / WM37) (Yeast).